The following is a 799-amino-acid chain: MRCPSLTRLPYRAVSGLPRSVVRLQSQNFLTRRCASTAVLRSPTAAPAYQSILNKHLQQRRNASGTAAAVLEAAASDNLSQEAIIENLDPVEAGRLSRVRNIGIAAHIDSGKTTCTERVLFYTGRIKAIHEVRGGDKVGAKMDSMDLEREKGITIQSAATFCDWVKKDEDGKENKYHFNLIDTPGHIDFTIEVERALRVLDGAVMILCAVSGVQSQTITVDRQMRRYNVPRISFVNKMDRMGANPFKAVDQINNKLKLPAAAVQVPIGAEDEFEGVVDLIRMKAIYNRGPSGEELFETEEIPEKVKSTVEERRKKLIETLADVDDEIAELFILEEEPTEQQLKAAIRRATIGLKFTPVFMGSALANKSVQPMLDGVVDYLPNPAEVQNLALDKKRDEASVQLVPYQSLPLVGLAFKLEESNFGQLTYIRVYQGTLRKGANVFNARNDKKIKIPRIVRMHSNEMEEVSEVGAGEICAVFGVDCASGDTFTDGQLGYTMSSMFVPEPVISLSIKPKNNKDAAKFSKAMARFQREDPTFRVTYDVESEQTLISGMGELHLDIYVERMRREYNVDCETGPPQVAYRETIGNRVEFDHLLKKQSGGPGDYARVVGWMEPTGKLDDNVFEEQIVGGSISEKFLFACEKGFHLACEKGPLIGHKVLGTKMVINDGATHMTDSSEMSFKNATQQAFRKAFKESNPSVLEPMMKTVVTAPAEFQGDVISLLNKRNATINDSEVGVDEFTVYADCSLNGMFGFSSNLRAATQGKGEYTMEFSHYEKCPPQVQKELIAKYLKAQADRHKK.

Residues 1–34 (MRCPSLTRLPYRAVSGLPRSVVRLQSQNFLTRRC) constitute a mitochondrion transit peptide. The tr-type G domain occupies 97-384 (SRVRNIGIAA…GVVDYLPNPA (288 aa)). Residues 106–113 (AHIDSGKT), 182–186 (DTPGH), and 236–239 (NKMD) contribute to the GTP site.

It belongs to the TRAFAC class translation factor GTPase superfamily. Classic translation factor GTPase family. EF-G/EF-2 subfamily.

Its subcellular location is the mitochondrion. Its pathway is protein biosynthesis; polypeptide chain elongation. Its function is as follows. Mitochondrial GTPase that catalyzes the GTP-dependent ribosomal translocation step during translation elongation. During this step, the ribosome changes from the pre-translocational (PRE) to the post-translocational (POST) state as the newly formed A-site-bound peptidyl-tRNA and P-site-bound deacylated tRNA move to the P and E sites, respectively. Catalyzes the coordinated movement of the two tRNA molecules, the mRNA and conformational changes in the ribosome. The sequence is that of Elongation factor G, mitochondrial (mef1) from Aspergillus flavus (strain ATCC 200026 / FGSC A1120 / IAM 13836 / NRRL 3357 / JCM 12722 / SRRC 167).